Consider the following 962-residue polypeptide: Integrator complex subunit 7 (962 aa).

A phosphoserine mark is found at Ser-338 and Ser-809.

It belongs to the Integrator subunit 7 family. As to quaternary structure, component of the Integrator complex, composed of core subunits INTS1, INTS2, INTS3, INTS4, INTS5, INTS6, INTS7, INTS8, INTS9/RC74, INTS10, INTS11/CPSF3L, INTS12, INTS13, INTS14 and INTS15. The core complex associates with protein phosphatase 2A subunits PPP2CA and PPP2R1A, to form the Integrator-PP2A (INTAC) complex. Interacts with NABP2.

It is found in the nucleus. Its subcellular location is the chromosome. It localises to the cytoplasm. Its function is as follows. Component of the integrator complex, a multiprotein complex that terminates RNA polymerase II (Pol II) transcription in the promoter-proximal region of genes. The integrator complex provides a quality checkpoint during transcription elongation by driving premature transcription termination of transcripts that are unfavorably configured for transcriptional elongation: the complex terminates transcription by (1) catalyzing dephosphorylation of the C-terminal domain (CTD) of Pol II subunit POLR2A/RPB1 and SUPT5H/SPT5, (2) degrading the exiting nascent RNA transcript via endonuclease activity and (3) promoting the release of Pol II from bound DNA. The integrator complex is also involved in terminating the synthesis of non-coding Pol II transcripts, such as enhancer RNAs (eRNAs), small nuclear RNAs (snRNAs), telomerase RNAs and long non-coding RNAs (lncRNAs). May be not involved in the recruitment of cytoplasmic dynein to the nuclear envelope by different components of the INT complex. Plays a role in DNA damage response (DDR) signaling during the S phase. In Homo sapiens (Human), this protein is Integrator complex subunit 7.